A 341-amino-acid chain; its full sequence is N-acetyl-gamma-glutamyl-phosphate reductase (341 aa).

Residue C145 is part of the active site.

Belongs to the NAGSA dehydrogenase family. Type 1 subfamily.

Its subcellular location is the cytoplasm. The catalysed reaction is N-acetyl-L-glutamate 5-semialdehyde + phosphate + NADP(+) = N-acetyl-L-glutamyl 5-phosphate + NADPH + H(+). It participates in amino-acid biosynthesis; L-arginine biosynthesis; N(2)-acetyl-L-ornithine from L-glutamate: step 3/4. In terms of biological role, catalyzes the NADPH-dependent reduction of N-acetyl-5-glutamyl phosphate to yield N-acetyl-L-glutamate 5-semialdehyde. The sequence is that of N-acetyl-gamma-glutamyl-phosphate reductase from Methanothrix thermoacetophila (strain DSM 6194 / JCM 14653 / NBRC 101360 / PT) (Methanosaeta thermophila).